The sequence spans 103 residues: Large ribosomal subunit protein uL23 (103 aa).

This sequence belongs to the universal ribosomal protein uL23 family. As to quaternary structure, part of the 50S ribosomal subunit. Contacts protein L29, and trigger factor when it is bound to the ribosome.

Its function is as follows. One of the early assembly proteins it binds 23S rRNA. One of the proteins that surrounds the polypeptide exit tunnel on the outside of the ribosome. Forms the main docking site for trigger factor binding to the ribosome. This is Large ribosomal subunit protein uL23 from Chlorobium phaeobacteroides (strain DSM 266 / SMG 266 / 2430).